Here is a 52-residue protein sequence, read N- to C-terminus: Conotoxin Cal9.2d (52 aa).

Positions 1 to 6 (KRGVTL) are excised as a propeptide. 3 cysteine pairs are disulfide-bonded: cysteine 14-cysteine 31, cysteine 19-cysteine 41, and cysteine 21-cysteine 46.

As to expression, expressed by the venom duct.

The protein resides in the secreted. In terms of biological role, probable neurotoxin with unknown target. Possibly targets ion channels. This is Conotoxin Cal9.2d from Californiconus californicus (California cone).